The following is a 553-amino-acid chain: Protein TIC 55, chloroplastic (553 aa).

Residues 1–60 constitute a chloroplast transit peptide; it reads MALALASANSFLLPTKTHFALHVSPPPSKKTLLCTNPSSNFSFNKALSSRRRKQAWCVAA. The Stromal portion of the chain corresponds to 61–492; sequence AADVKDATLL…GCSSAIKAFQ (432 aa). Residues 103–208 form the Rieske domain; the sequence is WYPLYLTKNV…VRDSQGVLWV (106 aa). [2Fe-2S] cluster contacts are provided by Cys144, His146, Cys163, and His166. Fe cation is bound by residues His257 and His262. A helical membrane pass occupies residues 493–513; the sequence is IWKNVLSGVVVALAALAILVS. Over 514–518 the chain is Chloroplast intermembrane; it reads GRQWK. Residues 519–539 traverse the membrane as a helical segment; that stretch reads VLLLASASLCSVGVYACSTAI. Topologically, residues 540–553 are stromal; the sequence is AMNTTNFIRVHRRL.

Part of the Tic complex. Interacts with TIC62 and TIC110. [2Fe-2S] cluster is required as a cofactor.

The protein resides in the plastid. It is found in the chloroplast inner membrane. Functionally, involved in protein precursor import into chloroplasts. Part of the redox regulon consisting of TIC32, TIC 55 and TIC62. This chain is Protein TIC 55, chloroplastic (TIC55), found in Pisum sativum (Garden pea).